Consider the following 119-residue polypeptide: Membrane-anchored ubiquitin-fold protein 6 (119 aa).

In terms of domain architecture, Ubiquitin-like spans Ile8–Leu76. A lipid anchor (S-palmitoyl cysteine) is attached at Cys114. Cys116 is subject to Cysteine methyl ester. The S-geranylgeranyl cysteine moiety is linked to residue Cys116. The propeptide at Thr117–Leu119 is removed in mature form.

In terms of tissue distribution, ubiquitous.

Its subcellular location is the cell membrane. Functionally, may serve as docking site to facilitate the association of other proteins to the plasma membrane. This chain is Membrane-anchored ubiquitin-fold protein 6 (MUB6), found in Arabidopsis thaliana (Mouse-ear cress).